A 68-amino-acid polypeptide reads, in one-letter code: SERF-like protein YDL085C-A (68 aa).

Basic and acidic residues-rich tracts occupy residues 1-43 and 50-68; these read MARG…EILR and DARR…KTRR. Residues 1-68 are disordered; it reads MARGNQRDLA…EKLKAEKTRR (68 aa). Serine 37 is subject to Phosphoserine.

This sequence belongs to the SERF family.

Its subcellular location is the cytoplasm. The protein resides in the nucleus. This chain is SERF-like protein YDL085C-A, found in Saccharomyces cerevisiae (strain ATCC 204508 / S288c) (Baker's yeast).